The sequence spans 155 residues: Sec-independent protein translocase protein TatB (155 aa).

Residues 1–21 (MIDLGISKIALIGAVALIVIG) traverse the membrane as a helical segment. 2 disordered regions span residues 81–103 (ASDF…LPGF) and 131–155 (SGIR…SRKA). A compositionally biased stretch (polar residues) spans 89–98 (SETTGSTSSD).

Belongs to the TatB family. As to quaternary structure, the Tat system comprises two distinct complexes: a TatABC complex, containing multiple copies of TatA, TatB and TatC subunits, and a separate TatA complex, containing only TatA subunits. Substrates initially bind to the TatABC complex, which probably triggers association of the separate TatA complex to form the active translocon.

Its subcellular location is the cell inner membrane. Part of the twin-arginine translocation (Tat) system that transports large folded proteins containing a characteristic twin-arginine motif in their signal peptide across membranes. Together with TatC, TatB is part of a receptor directly interacting with Tat signal peptides. TatB may form an oligomeric binding site that transiently accommodates folded Tat precursor proteins before their translocation. The sequence is that of Sec-independent protein translocase protein TatB from Polaromonas naphthalenivorans (strain CJ2).